We begin with the raw amino-acid sequence, 475 residues long: Adenosylhomocysteinase (475 aa).

Substrate-binding residues include Thr61, Asp140, and Glu200. 201-203 provides a ligand contact to NAD(+); the sequence is TTT. The substrate site is built by Lys230 and Asp234. NAD(+)-binding positions include Asn235, 264–269, Glu287, Asn322, 343–345, and Asn388; these read GYGDVG and IGH.

Belongs to the adenosylhomocysteinase family. Requires NAD(+) as cofactor.

Its subcellular location is the cytoplasm. The catalysed reaction is S-adenosyl-L-homocysteine + H2O = L-homocysteine + adenosine. It participates in amino-acid biosynthesis; L-homocysteine biosynthesis; L-homocysteine from S-adenosyl-L-homocysteine: step 1/1. Functionally, may play a key role in the regulation of the intracellular concentration of adenosylhomocysteine. This Paracidovorax citrulli (strain AAC00-1) (Acidovorax citrulli) protein is Adenosylhomocysteinase.